Here is a 64-residue protein sequence, read N- to C-terminus: Temporin-ALh (64 aa).

A signal peptide spans 1-22 (MFPLKKSLLLLFFLATINLSLC). A propeptide spanning residues 23-46 (EQERNAEEERRDEPDERNAEVEKR) is cleaved from the precursor. Ser-62 carries the post-translational modification Serine amide.

The protein belongs to the frog skin active peptide (FSAP) family. Temporin subfamily. As to expression, expressed by the skin glands.

Its subcellular location is the secreted. Its function is as follows. Antimicrobial peptide with activity against Gram-positive and Gram-negative bacteria and against fungi. Has been tested against S.aureus (MIC=2.5 ug/mL), B.pumilus (MIC=7.5 ug/mL), B.cereus (MIC=75.0 ug/mL), E.coli (MIC=5.0 ug/mL), B.dysenteriae (MIC=20.0 ug/mL), A.cacoaceticus (MIC=60.0 ug/mL), P.aeruginosa (MIC=2.5 ug/mL) and C.albicans (MIC=2.5 ug/mL). Also shows a weak hemolytic activity. This chain is Temporin-ALh, found in Amolops loloensis (Lolokou Sucker Frog).